Here is a 407-residue protein sequence, read N- to C-terminus: Phosphopentomutase (407 aa).

Mn(2+)-binding residues include aspartate 10, aspartate 306, histidine 311, aspartate 347, histidine 348, and histidine 359.

Belongs to the phosphopentomutase family. Requires Mn(2+) as cofactor.

It localises to the cytoplasm. It carries out the reaction 2-deoxy-alpha-D-ribose 1-phosphate = 2-deoxy-D-ribose 5-phosphate. It catalyses the reaction alpha-D-ribose 1-phosphate = D-ribose 5-phosphate. Its pathway is carbohydrate degradation; 2-deoxy-D-ribose 1-phosphate degradation; D-glyceraldehyde 3-phosphate and acetaldehyde from 2-deoxy-alpha-D-ribose 1-phosphate: step 1/2. Its function is as follows. Isomerase that catalyzes the conversion of deoxy-ribose 1-phosphate (dRib-1-P) and ribose 1-phosphate (Rib-1-P) to deoxy-ribose 5-phosphate (dRib-5-P) and ribose 5-phosphate (Rib-5-P), respectively. This is Phosphopentomutase from Edwardsiella ictaluri (strain 93-146).